Reading from the N-terminus, the 259-residue chain is MNRDNAIAWSVEDLCVNYDHSDVLCHITFSLPAGAMAAIIGPNGAGKSTLLKASLGLIRASSGQSLFFGQRFSKVHHRIAYMPQRASVDWDFPMTVLDLVLMGCYGYKGIWNRISTDDRQEAMRILERVGLEAFANRQIGKLSGGQQQRAFLARSLMQKADLYLMDELFSAIDMASYQMVVDVLQELKSEGKTIVVIHHDLSNVRKLFDHVILLNKHLVCSGSVEECLTKEAIFQAYGCELELLDYTLKLSRGKYQGSC.

An ABC transporter domain is found at 9 to 241 (WSVEDLCVNY…AIFQAYGCEL (233 aa)). 41-48 (GPNGAGKS) lines the ATP pocket.

This sequence belongs to the ABC transporter superfamily.

The protein localises to the cell inner membrane. Functionally, part of an ATP-driven transport system CT_067/CT_068/CT_069/CT_070 for a metal. Probably responsible for energy coupling to the transport system. This is Probable metal transport system ATP-binding protein CT_068 from Chlamydia trachomatis serovar D (strain ATCC VR-885 / DSM 19411 / UW-3/Cx).